The chain runs to 510 residues: GTPase Der (510 aa).

2 consecutive EngA-type G domains span residues 4 to 168 (PVVA…AEKM) and 222 to 395 (IKIA…ACAT). Residues 10-17 (GRPNVGKS), 57-61 (DTGGI), 120-123 (NKTD), 228-235 (GRPNVGKS), 275-279 (DTAGV), and 340-343 (NKWD) contribute to the GTP site. The KH-like domain occupies 396–480 (QKMTTSMLTR…PIRLLFQEGN (85 aa)).

The protein belongs to the TRAFAC class TrmE-Era-EngA-EngB-Septin-like GTPase superfamily. EngA (Der) GTPase family. In terms of assembly, associates with the 50S ribosomal subunit.

GTPase that plays an essential role in the late steps of ribosome biogenesis. The protein is GTPase Der of Pasteurella multocida (strain Pm70).